The chain runs to 468 residues: Cysteine--tRNA ligase (468 aa).

Position 33 (C33) interacts with Zn(2+). The 'HIGH' region signature appears at 35–45 (ATVQGLPHIGH). Residues C211, H236, and E240 each coordinate Zn(2+). The 'KMSKS' region motif lies at 267–271 (KMSKS). Residue K270 participates in ATP binding.

It belongs to the class-I aminoacyl-tRNA synthetase family. As to quaternary structure, monomer. It depends on Zn(2+) as a cofactor.

Its subcellular location is the cytoplasm. The catalysed reaction is tRNA(Cys) + L-cysteine + ATP = L-cysteinyl-tRNA(Cys) + AMP + diphosphate. The sequence is that of Cysteine--tRNA ligase from Mycobacterium ulcerans (strain Agy99).